We begin with the raw amino-acid sequence, 320 residues long: MPTGDFDSKPSWADQVEEEGEDDKCVTSELLKGIPLPTGDTSPEPELLPGDPLPPPKEVINGNIKTVTEYKIEEDGKKFKIVRTFRIETRKASKAVARRKNWKKFGNSEFDPPGPNVATTTVSDDVSMTFITSKEDLNCQEEEDPMNKLKGQKIVSCRICKGDHWTTRCPYKDTLGPMQKELAEQLGLSTGEKEKLPGELEPVQAAQSKTGKYVPPSLRDGASRRGESMQPNRRADDNATIRVTNLSEDTRETDLQELFRPFGSISRIYLAKDKTTGQSKGFAFISFHRREDAARAIAGVSGFGYDHLILNVEWAKPSTN.

The interval 1–60 is disordered; it reads MPTGDFDSKPSWADQVEEEGEDDKCVTSELLKGIPLPTGDTSPEPELLPGDPLPPPKEVI. A phosphoserine mark is found at S8 and S11. Residues T38 and T41 each carry the phosphothreonine modification. 4 positions are modified to phosphoserine: S42, S189, S223, and S264. Positions 204–233 are disordered; that stretch reads QAAQSKTGKYVPPSLRDGASRRGESMQPNR. A compositionally biased stretch (basic and acidic residues) spans 221–233; it reads GASRRGESMQPNR. Positions 239–317 constitute an RRM domain; sequence ATIRVTNLSE…LILNVEWAKP (79 aa).

It belongs to the eIF-3 subunit G family. As to quaternary structure, component of the eukaryotic translation initiation factor 3 (eIF-3) complex, which is composed of 13 subunits: EIF3A, EIF3B, EIF3C, EIF3D, EIF3E, EIF3F, EIF3G, EIF3H, EIF3I, EIF3J, EIF3K, EIF3L and EIF3M. The eIF-3 complex appears to include 3 stable modules: module A is composed of EIF3A, EIF3B, EIF3G and EIF3I; module B is composed of EIF3F, EIF3H, and EIF3M; and module C is composed of EIF3C, EIF3D, EIF3E, EIF3K and EIF3L. EIF3C of module C binds EIF3B of module A and EIF3H of module B, thereby linking the three modules. EIF3J is a labile subunit that binds to the eIF-3 complex via EIF3B. The eIF-3 complex may interact with RPS6KB1 under conditions of nutrient depletion. Mitogenic stimulation may lead to binding and activation of a complex composed of MTOR and RPTOR, leading to phosphorylation and release of RPS6KB1 and binding of EIF4B to eIF-3. Interacts (via C-terminus) with AIFM1 (via N-terminus). Interacts with DHX33; the interaction is independent of RNA. Phosphorylated. Phosphorylation is enhanced upon serum stimulation.

Its subcellular location is the cytoplasm. It is found in the nucleus. The protein resides in the perinuclear region. In terms of biological role, RNA-binding component of the eukaryotic translation initiation factor 3 (eIF-3) complex, which is required for several steps in the initiation of protein synthesis. The eIF-3 complex associates with the 40S ribosome and facilitates the recruitment of eIF-1, eIF-1A, eIF-2:GTP:methionyl-tRNAi and eIF-5 to form the 43S pre-initiation complex (43S PIC). The eIF-3 complex stimulates mRNA recruitment to the 43S PIC and scanning of the mRNA for AUG recognition. The eIF-3 complex is also required for disassembly and recycling of post-termination ribosomal complexes and subsequently prevents premature joining of the 40S and 60S ribosomal subunits prior to initiation. The eIF-3 complex specifically targets and initiates translation of a subset of mRNAs involved in cell proliferation, including cell cycling, differentiation and apoptosis, and uses different modes of RNA stem-loop binding to exert either translational activation or repression. This subunit can bind 18S rRNA. The sequence is that of Eukaryotic translation initiation factor 3 subunit G (Eif3g) from Mus musculus (Mouse).